The primary structure comprises 1180 residues: Integrin alpha-1 (1180 aa).

Residues M1 to S28 form the signal peptide. The Extracellular portion of the chain corresponds to F29–P1142. One copy of the FG-GAP 1 repeat lies at N30 to P91. A disulfide bond links C82 and C92. N100, N105, N112, N217, N317, N341, N402, N418, and N459 each carry an N-linked (GlcNAc...) asparagine glycan. Residues T101–S160 form an FG-GAP 2 repeat. Residues I175–A364 form the VWFA domain. One copy of the FG-GAP 3 repeat lies at T365–H417. 4 FG-GAP repeats span residues Q422–I474, N475–Y537, S556–E614, and Q618–N678. Residues D497, D499, D501, and D505 each contribute to the Ca(2+) site. An N-linked (GlcNAc...) asparagine glycan is attached at N531. Ca(2+) is bound by residues D579, N581, D583, D587, D641, N643, D645, and D649. A disulfide bridge connects residues C687 and C696. N-linked (GlcNAc...) asparagine glycans are attached at residues N698, N747, and N779. Residues C702 and C755 are joined by a disulfide bond. A disulfide bond links C807 and C813. N820, N839, N882, N907, N938, N965, N973, and N1007 each carry an N-linked (GlcNAc...) asparagine glycan. A disulfide bond links C877 and C885. Intrachain disulfides connect C1029-C1062 and C1066-C1073. N-linked (GlcNAc...) asparagine glycosylation is found at N1084, N1103, and N1114. A helical membrane pass occupies residues L1143–W1165. The Cytoplasmic segment spans residues K1166–K1180. The GFFKR motif signature appears at G1168–R1172.

Belongs to the integrin alpha chain family. As to quaternary structure, heterodimer of an alpha and a beta subunit. Alpha-1 associates with beta-1. Interacts with RAB21. Interacts (via cytoplasmic domain) with PTPN2; activates PTPN2 phosphatase activity towards EGFR and negatively regulates EGF signaling.

It localises to the membrane. Integrin alpha-1/beta-1 is a receptor for laminin and collagen. It recognizes the proline-hydroxylated sequence G-F-P-G-E-R in collagen. Involved in anchorage-dependent, negative regulation of EGF-stimulated cell growth. The polypeptide is Integrin alpha-1 (Itga1) (Rattus norvegicus (Rat)).